The primary structure comprises 657 residues: Heat shock protein hsp-6 (657 aa).

The N-terminal 27 residues, 1–27 (MLSARSFLSSARTIARSSLMSARSLSD), are a transit peptide targeting the mitochondrion. Residues 637–657 (KNSGGDAQEAKTAEEPKKEQN) form a disordered region. Basic and acidic residues predominate over residues 644–657 (QEAKTAEEPKKEQN).

It belongs to the heat shock protein 70 family.

It is found in the mitochondrion. The protein is Heat shock protein hsp-6 of Caenorhabditis elegans.